Reading from the N-terminus, the 250-residue chain is Vitamin B12 import ATP-binding protein BtuD (250 aa).

The 231-residue stretch at L3–A233 folds into the ABC transporter domain. G29–S36 lines the ATP pocket.

It belongs to the ABC transporter superfamily. Vitamin B12 importer (TC 3.A.1.13.1) family. As to quaternary structure, the complex is composed of two ATP-binding proteins (BtuD), two transmembrane proteins (BtuC) and a solute-binding protein (BtuF).

The protein resides in the cell inner membrane. The catalysed reaction is an R-cob(III)alamin(out) + ATP + H2O = an R-cob(III)alamin(in) + ADP + phosphate + H(+). Part of the ABC transporter complex BtuCDF involved in vitamin B12 import. Responsible for energy coupling to the transport system. The protein is Vitamin B12 import ATP-binding protein BtuD of Pectobacterium atrosepticum (strain SCRI 1043 / ATCC BAA-672) (Erwinia carotovora subsp. atroseptica).